Here is a 108-residue protein sequence, read N- to C-terminus: MMKGQLAGLMRQAQQMQENMKKAQDALAEIQVEGAAGGGLVKVTMTCRHDVKRVAIDPSLLGEDKDMLEDLVAAAFNDALRKAEATSQEKMASVTAGMPLPPGMKLPF.

The interval 86-108 (TSQEKMASVTAGMPLPPGMKLPF) is disordered. Residues 99–108 (PLPPGMKLPF) show a composition bias toward pro residues.

It belongs to the YbaB/EbfC family. Homodimer.

The protein localises to the cytoplasm. Its subcellular location is the nucleoid. Its function is as follows. Binds to DNA and alters its conformation. May be involved in regulation of gene expression, nucleoid organization and DNA protection. In Bordetella parapertussis (strain 12822 / ATCC BAA-587 / NCTC 13253), this protein is Nucleoid-associated protein BPP1222.